Here is a 388-residue protein sequence, read N- to C-terminus: UDP-4-amino-4-deoxy-L-arabinose--oxoglutarate aminotransferase (388 aa).

Lys-183 bears the N6-(pyridoxal phosphate)lysine mark.

This sequence belongs to the DegT/DnrJ/EryC1 family. ArnB subfamily. As to quaternary structure, homodimer. Pyridoxal 5'-phosphate is required as a cofactor.

It carries out the reaction UDP-4-amino-4-deoxy-beta-L-arabinose + 2-oxoglutarate = UDP-beta-L-threo-pentopyranos-4-ulose + L-glutamate. It participates in nucleotide-sugar biosynthesis; UDP-4-deoxy-4-formamido-beta-L-arabinose biosynthesis; UDP-4-deoxy-4-formamido-beta-L-arabinose from UDP-alpha-D-glucuronate: step 2/3. The protein operates within bacterial outer membrane biogenesis; lipopolysaccharide biosynthesis. Catalyzes the conversion of UDP-4-keto-arabinose (UDP-Ara4O) to UDP-4-amino-4-deoxy-L-arabinose (UDP-L-Ara4N). The modified arabinose is attached to lipid A and is required for resistance to polymyxin and cationic antimicrobial peptides. The chain is UDP-4-amino-4-deoxy-L-arabinose--oxoglutarate aminotransferase from Shewanella sediminis (strain HAW-EB3).